The chain runs to 160 residues: Ribosomal RNA large subunit methyltransferase H (160 aa).

S-adenosyl-L-methionine-binding positions include Leu-76, Gly-108, and 127-132 (FGFMTW).

Belongs to the RNA methyltransferase RlmH family. In terms of assembly, homodimer.

The protein resides in the cytoplasm. It catalyses the reaction pseudouridine(1915) in 23S rRNA + S-adenosyl-L-methionine = N(3)-methylpseudouridine(1915) in 23S rRNA + S-adenosyl-L-homocysteine + H(+). Its function is as follows. Specifically methylates the pseudouridine at position 1915 (m3Psi1915) in 23S rRNA. This is Ribosomal RNA large subunit methyltransferase H from Bartonella tribocorum (strain CIP 105476 / IBS 506).